A 214-amino-acid polypeptide reads, in one-letter code: Guanylate kinase (214 aa).

The region spanning G6–R192 is the Guanylate kinase-like domain. A13–T20 provides a ligand contact to ATP.

Belongs to the guanylate kinase family.

It is found in the cytoplasm. The enzyme catalyses GMP + ATP = GDP + ADP. In terms of biological role, essential for recycling GMP and indirectly, cGMP. This chain is Guanylate kinase, found in Pseudomonas savastanoi pv. phaseolicola (strain 1448A / Race 6) (Pseudomonas syringae pv. phaseolicola (strain 1448A / Race 6)).